A 593-amino-acid polypeptide reads, in one-letter code: MTISNKSWRSYFPHLRKLPEDDQYLYSDDTNSSIIAEEELHHSVDKSSKTDVTAETTAVEPHPHNLRHDLPYEVRDEAGRKWWKYFDEFEYRVNKEYKKSRKWYEFLYPNHTTQTKAERRLLYKLDIIIALYFFMLCWSKSVDLNNYTNAYVSNMKEDLNMKGNDYVYTSTIANVGAIVFQLPFMYLLPRFPSHIILPVMDLGWTWFTFACYRANSLAELRAYRFILSAFGAAYYPVSQYILGCWYAPDEINSRVCLFFCGQQLGSVTSGLLQSRIFKSLNGVHGLAGWRWMFLIDAIAISLPTAIIGFFVIPGVPSKCYSLFLTDEEIRIARARNKRNQIKDGVDKSKLAPLWSRKLWKKVFCTPAFWVLVVFDTCSWNNMTAYSGSYTLWLKSNTKYSIAQVNNLSVIPACLGFAYVIFCAFGADLFRCKWIFMVFAAIMNTVSCALLIKWDIPSKAKWYAFFTTYFSVAASPCLWSFINDFLRFDPQVKAITWIAIYSFSQSTYAWIPTLAWPTVESPRFKTGYTVSLIFGAIYGLWTFVVLFFYKRNEKKHALGNGIILYDSNKGEELPEFVKKNMEERDGYYYLKRSS.

Over 1 to 121 (MTISNKSWRS…TTQTKAERRL (121 aa)) the chain is Extracellular. 3 positions are modified to phosphoserine: S32, S33, and S43. Residues 122–142 (LYKLDIIIALYFFMLCWSKSV) form a helical membrane-spanning segment. Over 143 to 166 (DLNNYTNAYVSNMKEDLNMKGNDY) the chain is Cytoplasmic. The helical transmembrane segment at 167–187 (VYTSTIANVGAIVFQLPFMYL) threads the bilayer. Residues 188-190 (LPR) lie on the Extracellular side of the membrane. A helical transmembrane segment spans residues 191–211 (FPSHIILPVMDLGWTWFTFAC). At 212 to 224 (YRANSLAELRAYR) the chain is on the cytoplasmic side. Residues 225–245 (FILSAFGAAYYPVSQYILGCW) form a helical membrane-spanning segment. Topologically, residues 246–291 (YAPDEINSRVCLFFCGQQLGSVTSGLLQSRIFKSLNGVHGLAGWRW) are extracellular. Residues 292 to 312 (MFLIDAIAISLPTAIIGFFVI) form a helical membrane-spanning segment. The Cytoplasmic portion of the chain corresponds to 313–361 (PGVPSKCYSLFLTDEEIRIARARNKRNQIKDGVDKSKLAPLWSRKLWKK). Residues 362–382 (VFCTPAFWVLVVFDTCSWNNM) traverse the membrane as a helical segment. Over 383–408 (TAYSGSYTLWLKSNTKYSIAQVNNLS) the chain is Extracellular. The helical transmembrane segment at 409 to 429 (VIPACLGFAYVIFCAFGADLF) threads the bilayer. At 430–432 (RCK) the chain is on the cytoplasmic side. The chain crosses the membrane as a helical span at residues 433-453 (WIFMVFAAIMNTVSCALLIKW). Residues 454–460 (DIPSKAK) are Extracellular-facing. A helical membrane pass occupies residues 461–481 (WYAFFTTYFSVAASPCLWSFI). The Cytoplasmic segment spans residues 482–492 (NDFLRFDPQVK). Residues 493 to 513 (AITWIAIYSFSQSTYAWIPTL) form a helical membrane-spanning segment. At 514–526 (AWPTVESPRFKTG) the chain is on the extracellular side. Residues 527 to 547 (YTVSLIFGAIYGLWTFVVLFF) traverse the membrane as a helical segment. The Cytoplasmic segment spans residues 548-593 (YKRNEKKHALGNGIILYDSNKGEELPEFVKKNMEERDGYYYLKRSS).

This sequence belongs to the major facilitator superfamily. Allantoate permease family.

It localises to the cell membrane. Functionally, involved in uptake of biotin with the concomitant entry of protons. The sequence is that of Vitamin H transporter (VHT1) from Saccharomyces cerevisiae (strain ATCC 204508 / S288c) (Baker's yeast).